Consider the following 247-residue polypeptide: Thioredoxin reductase-like selenoprotein T homolog selt-1.1 (247 aa).

The first 26 residues, 1 to 26 (MSRFGVFIIGVLFFMSVCDVLRTVSA), serve as a signal peptide directing secretion. A disulfide bond links Cys-92 and Cys-95.

The protein belongs to the SelWTH family. SELT subfamily. In terms of tissue distribution, broadly expressed in neurons of nervous system including ADL, ASH, ASI, ASJ, ASK and AWB amphid sensilla neurons, in epithelial cells including hypodermal, arcade, pharyngeal, vulval and rectal cells, and in somatic muscle cells of the head, neck and body wall, and non-striated pharyngeal muscles.

Its subcellular location is the endoplasmic reticulum. The catalysed reaction is [thioredoxin]-dithiol + NADP(+) = [thioredoxin]-disulfide + NADPH + H(+). Its function is as follows. Probably has thioredoxin reductase-like oxidoreductase activity. Plays a role in regulating the oxidative stress response, and odorant and pathogenic bacteria avoidance behavior. The protein is Thioredoxin reductase-like selenoprotein T homolog selt-1.1 of Caenorhabditis elegans.